A 300-amino-acid polypeptide reads, in one-letter code: Ribosomal protein L11 methyltransferase (300 aa).

S-adenosyl-L-methionine-binding residues include threonine 152, glycine 173, aspartate 195, and asparagine 234.

The protein belongs to the methyltransferase superfamily. PrmA family.

It is found in the cytoplasm. The catalysed reaction is L-lysyl-[protein] + 3 S-adenosyl-L-methionine = N(6),N(6),N(6)-trimethyl-L-lysyl-[protein] + 3 S-adenosyl-L-homocysteine + 3 H(+). Methylates ribosomal protein L11. This Burkholderia mallei (strain NCTC 10247) protein is Ribosomal protein L11 methyltransferase.